Consider the following 276-residue polypeptide: Putative olfactory receptor 10J6 (276 aa).

Residues 1–25 (MRRKNLTEVTEFVFLGFSRFHKHHI) lie on the Extracellular side of the membrane. An N-linked (GlcNAc...) asparagine glycan is attached at Asn5. Residues 26–46 (TLFVVFLILYTLTVAGNAIIM) form a helical membrane-spanning segment. The Cytoplasmic segment spans residues 47-54 (TIICIDRH). A helical membrane pass occupies residues 55–75 (LHTPMYFFLSMLASSKTVYTL). Topologically, residues 76–99 (FIIPQMLSSFVTQTQPISLAGCTT) are extracellular. Cys97 and Cys188 are oxidised to a cystine. Residues 100–120 (QTFFFVTLAINNCFLLTVMGY) traverse the membrane as a helical segment. Over 121 to 139 (DHYMAICNPLRYRVITSKK) the chain is Cytoplasmic. A helical membrane pass occupies residues 140-160 (VCVQLVCGAFSIGLAMAAVQV). Topologically, residues 161–196 (TSIFTLPFCHTVVGHFFCDILPVMKLSCINTTINEI) are extracellular. N-linked (GlcNAc...) asparagine glycosylation occurs at Asn190. Residues 197–216 (INFVVRLFVILVPMGLVFIS) traverse the membrane as a helical segment. Over 217-236 (YVLIISTVLKIASAEGWKKT) the chain is Cytoplasmic. A helical transmembrane segment spans residues 237–257 (FATCAFHLTVVIVHYGCASIA). The Extracellular portion of the chain corresponds to 258 to 270 (YLMPKSENSIEQD). The helical transmembrane segment at 271-276 (LLLSVT) threads the bilayer.

Belongs to the G-protein coupled receptor 1 family.

The protein resides in the cell membrane. In terms of biological role, odorant receptor. This Homo sapiens (Human) protein is Putative olfactory receptor 10J6 (OR10J6P).